A 170-amino-acid polypeptide reads, in one-letter code: Lipoprotein signal peptidase (170 aa).

Helical transmembrane passes span 11–31, 41–61, 69–89, and 95–115; these read LGWLWLSVLVLVIDQVSKLHF, IVVIPDYFSWTLAYNTGAAFS, WQRWLFALIAIAVSAVLVVWL, and NETWLAIALALVLGGALGNLY. Residues Asp125 and Asp144 contribute to the active site. A helical transmembrane segment spans residues 136 to 156; the sequence is YFPAFNFADSAITVGAVMLAL.

The protein belongs to the peptidase A8 family.

The protein resides in the cell inner membrane. It catalyses the reaction Release of signal peptides from bacterial membrane prolipoproteins. Hydrolyzes -Xaa-Yaa-Zaa-|-(S,diacylglyceryl)Cys-, in which Xaa is hydrophobic (preferably Leu), and Yaa (Ala or Ser) and Zaa (Gly or Ala) have small, neutral side chains.. It participates in protein modification; lipoprotein biosynthesis (signal peptide cleavage). Functionally, this protein specifically catalyzes the removal of signal peptides from prolipoproteins. This Pseudomonas fluorescens (strain ATCC BAA-477 / NRRL B-23932 / Pf-5) protein is Lipoprotein signal peptidase.